Consider the following 348-residue polypeptide: Chloroacetanilide N-alkylformylase, oxygenase component (348 aa).

The Rieske domain occupies 7-108 (WYAVAWCDEV…ARERHKLIWA (102 aa)). [2Fe-2S] cluster-binding residues include cysteine 47, histidine 49, cysteine 66, and histidine 69. Residues histidine 159 and histidine 164 each coordinate Fe cation. Histidine 250 contacts substrate. Aspartate 293 serves as a coordination point for Fe cation.

In terms of assembly, the chloroacetanilide N-alkylformylase multicomponent enzyme system is composed of an oxygenase component (CndA) and an electron transfer component formed by a ferredoxin reductase (CndC1) and a ferredoxin (CndB1). In vitro, chloroacetanilide N-alkylformylase assays in which CndB1 is substituted for CndB2 demonstrate that the two enzymes possess nearly identical activities. Requires [2Fe-2S] cluster as cofactor.

It carries out the reaction butachlor + 2 reduced [2Fe-2S]-[ferredoxin] + O2 + 2 H(+) = butyl formate + N-(2,6-diethylphenyl)-2-chloroacetamide + 2 oxidized [2Fe-2S]-[ferredoxin] + H2O. The catalysed reaction is alachlor + 2 reduced [2Fe-2S]-[ferredoxin] + O2 + 2 H(+) = methyl formate + N-(2,6-diethylphenyl)-2-chloroacetamide + 2 oxidized [2Fe-2S]-[ferredoxin] + H2O. It catalyses the reaction acetochlor + 2 reduced [2Fe-2S]-[ferredoxin] + O2 + 2 H(+) = N-(2-ethyl-6-methylphenyl)-2-chloroacetamide + ethyl formate + 2 oxidized [2Fe-2S]-[ferredoxin] + H2O. With respect to regulation, activity enhanced by Fe(2+) and Mg(2+) ions. Divalent cations such as Ca(2+), Cr(2+), Co(2+), and Mn(2+) show moderate inhibition of the enzyme, whereas heavy metal ions such as Ag(+), Cu(2+), Pb(2+), Hg(2+), Ni(2+) and Zn(2+) severely inhibit the activity. In terms of biological role, component of the chloroacetanilide N-alkylformylase multicomponent enzyme system involved in the degradation of chloroacetanilide herbicides (N-alkoxyalkyl-N-chloroacetyl-substituted aniline derivatives). In vitro, catalyzes the N-dealkylation of butachlor, alachlor and acetochlor to yield 2-chloro-N-(2,6-diethylphenyl)acetamide (CDEPA) (for alachlor and butachlor) and 2-chloro-N-(2-methyl-6-ethylphenyl)acetamide (CMEPA) (for acetochlor). This chain is Chloroacetanilide N-alkylformylase, oxygenase component, found in Rhizorhabdus wittichii (strain DC-6 / KACC 16600) (Sphingomonas wittichii).